A 309-amino-acid chain; its full sequence is MKTLIRKFSRTAITVVLVILAFIAIFNAWVYYTESPWTRDARFSADVVAIAPDVSGLITQVNVHNQLVKKGQVLFTIDQPRYQKALEEAQADVAYYQVLAQEKRQEAGRRNRLGVQAMSREEIDQANNVLQTVLHQLAKAQATRDLAKLDLERTVIRAPADGWVTNLNVYTGEFITRGSTAVALVKQNSFYVLAYMEETKLEGVRPGYRAEITPLGSNKVLKGTVDSVAAGVTNASSTRDDKGMATIDSNLEWVRLAQRVPVRIRLDNQQENIWPAGTTATVVVTGKQDRDESQDSFFRKMAHRLREFG.

A helical transmembrane segment spans residues 12–32 (AITVVLVILAFIAIFNAWVYY).

Belongs to the membrane fusion protein (MFP) (TC 8.A.1) family.

The protein resides in the cell inner membrane. Its function is as follows. Forms an efflux pump with AaeB. In Escherichia coli O157:H7, this protein is p-hydroxybenzoic acid efflux pump subunit AaeA.